The following is a 132-amino-acid chain: Small ribosomal subunit protein uS11 (132 aa).

The protein belongs to the universal ribosomal protein uS11 family. Part of the 30S ribosomal subunit. Interacts with proteins S7 and S18. Binds to IF-3.

In terms of biological role, located on the platform of the 30S subunit, it bridges several disparate RNA helices of the 16S rRNA. Forms part of the Shine-Dalgarno cleft in the 70S ribosome. The polypeptide is Small ribosomal subunit protein uS11 (Lachnoclostridium phytofermentans (strain ATCC 700394 / DSM 18823 / ISDg) (Clostridium phytofermentans)).